An 880-amino-acid chain; its full sequence is Potassium transport protein 2 (880 aa).

N9 is a glycosylation site (N-linked (GlcNAc...) asparagine). A run of 2 helical transmembrane segments spans residues F28–S48 and T84–F104. The interval M157 to H182 is disordered. Over residues T165–K177 the composition is skewed to basic and acidic residues. N239, N283, N293, N294, N321, N443, and N460 each carry an N-linked (GlcNAc...) asparagine glycan. Residues H289–V315 are compositionally biased toward polar residues. Residues H289–D344 form a disordered region. A compositionally biased stretch (low complexity) spans S316–T325. Transmembrane regions (helical) follow at residues I494 to I514, L571 to I591, W625 to L645, I684 to A704, Q756 to G776, and F787 to L807. The segment at R857 to S880 is disordered.

The protein belongs to the TrkH potassium transport family.

The protein localises to the cell membrane. In terms of biological role, together with TRK1, defines the major, high-affinity potassium influx transport system. Involved in maintenance of the proper sodium/potassium ratio in the cell and in regulating the plasma membrane potential. The polypeptide is Potassium transport protein 2 (trk2) (Schizosaccharomyces pombe (strain 972 / ATCC 24843) (Fission yeast)).